Consider the following 496-residue polypeptide: Membrane-bound lytic murein transglycosylase F (496 aa).

Residues 1–29 (MFFRPDFRPRCAKWLIATGLFLMLGACVE) form the signal peptide. Positions 30-267 (KPTTLERVKE…RLKDRYYGHV (238 aa)) are non-LT domain. The LT domain stretch occupies residues 268-496 (DVLGYVGAYT…SGSSPDKPAL (229 aa)). Residue glutamate 314 is part of the active site. Residues 464 to 496 (VADGNLHVPGVDKTQPPAPPAPASGSSPDKPAL) form a disordered region. Residues 486 to 496 (ASGSSPDKPAL) show a composition bias toward low complexity.

The protein in the N-terminal section; belongs to the bacterial solute-binding protein 3 family. This sequence in the C-terminal section; belongs to the transglycosylase Slt family.

The protein resides in the cell outer membrane. The catalysed reaction is Exolytic cleavage of the (1-&gt;4)-beta-glycosidic linkage between N-acetylmuramic acid (MurNAc) and N-acetylglucosamine (GlcNAc) residues in peptidoglycan, from either the reducing or the non-reducing ends of the peptidoglycan chains, with concomitant formation of a 1,6-anhydrobond in the MurNAc residue.. Functionally, murein-degrading enzyme that degrades murein glycan strands and insoluble, high-molecular weight murein sacculi, with the concomitant formation of a 1,6-anhydromuramoyl product. Lytic transglycosylases (LTs) play an integral role in the metabolism of the peptidoglycan (PG) sacculus. Their lytic action creates space within the PG sacculus to allow for its expansion as well as for the insertion of various structures such as secretion systems and flagella. In Pseudomonas savastanoi pv. phaseolicola (strain 1448A / Race 6) (Pseudomonas syringae pv. phaseolicola (strain 1448A / Race 6)), this protein is Membrane-bound lytic murein transglycosylase F.